A 548-amino-acid polypeptide reads, in one-letter code: MGYDDVITHLGEFGPYQKRIYYLLCLPAIVCAFHKLAGVFLLAKPDFRCALPYENGSIYELSPHLWNLSYPENERCSYYDVDYTEEYLNGSIPRSSNETKTCSSYVYDRSKYLNSAVTEWNLVCSRSLLSATSDSLFMLGVLLGSLIFGQMSDKLGRKPTFFASLVLQLIFGVLAAVAPEYFSYTISRMIVGATTSGVFLVAYVIALEMVGSSYRLFAGVAMQMFFSVGFMLTAGFAYFIHDWRWLQIAITLPGLLFLCYYWIIPESARWLLMKGRKDEAFVIIEKAAKENKVEVPNEIYEQLVDEVAEKKKQDEMAASQPAATVFDLLRYPNLRRKTLLIFFDWFVNSGVYYGLSWNTNNLGGNQLVNFMISGAVEIPGYTLLLFTLNRWGRRSILCGTMMVAGISLLATIFVPSDMNWLIVACAMIGKLAITSSYGTIYIFSAEQFPTVVRNVGLGASSMVARVGGILAPYLKLLGEIWRPLPLIICGALSLTAGLLSLLLPETLNKPMPETIEDGENFGKKPAPQETAEEGGTQELSGMLNGKSG.

Residues 1-22 lie on the Cytoplasmic side of the membrane; it reads MGYDDVITHLGEFGPYQKRIYY. The chain crosses the membrane as a helical span at residues 23-43; the sequence is LLCLPAIVCAFHKLAGVFLLA. Residues 44–127 are Extracellular-facing; sequence KPDFRCALPY…TEWNLVCSRS (84 aa). N-linked (GlcNAc...) asparagine glycosylation is found at Asn55, Asn67, Asn89, and Asn97. A helical membrane pass occupies residues 128–148; the sequence is LLSATSDSLFMLGVLLGSLIF. Over 149 to 158 the chain is Cytoplasmic; the sequence is GQMSDKLGRK. A helical membrane pass occupies residues 159 to 179; the sequence is PTFFASLVLQLIFGVLAAVAP. At 180 to 189 the chain is on the extracellular side; it reads EYFSYTISRM. Residues 190–210 form a helical membrane-spanning segment; the sequence is IVGATTSGVFLVAYVIALEMV. Residues 211–219 lie on the Cytoplasmic side of the membrane; sequence GSSYRLFAG. A helical membrane pass occupies residues 220–240; the sequence is VAMQMFFSVGFMLTAGFAYFI. Residues 241 to 244 lie on the Extracellular side of the membrane; that stretch reads HDWR. A helical membrane pass occupies residues 245-265; sequence WLQIAITLPGLLFLCYYWIIP. Residues 266-337 are Cytoplasmic-facing; sequence ESARWLLMKG…LLRYPNLRRK (72 aa). The helical transmembrane segment at 338–358 threads the bilayer; it reads TLLIFFDWFVNSGVYYGLSWN. The Extracellular portion of the chain corresponds to 359-366; the sequence is TNNLGGNQ. Residues 367–387 form a helical membrane-spanning segment; it reads LVNFMISGAVEIPGYTLLLFT. Over 388 to 395 the chain is Cytoplasmic; the sequence is LNRWGRRS. A helical transmembrane segment spans residues 396–416; that stretch reads ILCGTMMVAGISLLATIFVPS. The Extracellular portion of the chain corresponds to 417-419; sequence DMN. Residues 420–440 form a helical membrane-spanning segment; it reads WLIVACAMIGKLAITSSYGTI. The Cytoplasmic portion of the chain corresponds to 441 to 453; the sequence is YIFSAEQFPTVVR. A helical transmembrane segment spans residues 454 to 474; that stretch reads NVGLGASSMVARVGGILAPYL. Over 475–482 the chain is Extracellular; the sequence is KLLGEIWR. The chain crosses the membrane as a helical span at residues 483-503; sequence PLPLIICGALSLTAGLLSLLL. Residues 504-548 lie on the Cytoplasmic side of the membrane; sequence PETLNKPMPETIEDGENFGKKPAPQETAEEGGTQELSGMLNGKSG. A disordered region spans residues 512–548; the sequence is PETIEDGENFGKKPAPQETAEEGGTQELSGMLNGKSG.

This sequence belongs to the major facilitator (TC 2.A.1) superfamily. Organic cation transporter (TC 2.A.1.19) family. Expressed in embryos and adults at low level. Expressed at higher level in third instar larvae.

The protein localises to the membrane. Probably transports organic cations. The sequence is that of Organic cation transporter protein (Orct) from Drosophila melanogaster (Fruit fly).